Here is a 746-residue protein sequence, read N- to C-terminus: Probably inactive copalyl diphosphate synthase 3 (746 aa).

The short motif at 331 to 334 is the DXDD motif; degenerated element; the sequence is DVND.

It belongs to the terpene synthase family. Tpsc subfamily. In terms of tissue distribution, mostly expressed in stems, and, at low levels, in roots and leaves, but barely in flowers.

In Isodon rubescens (Rabdosia rubescens), this protein is Probably inactive copalyl diphosphate synthase 3.